We begin with the raw amino-acid sequence, 377 residues long: tRNA 2-selenouridine synthase (377 aa).

The Rhodanese domain maps to 18 to 141; sequence ITRGVTLIDV…LRQEAMDATD (124 aa). The active-site S-selanylcysteine intermediate is Cys-101.

This sequence belongs to the SelU family. As to quaternary structure, monomer.

It catalyses the reaction 5-methylaminomethyl-2-thiouridine(34) in tRNA + selenophosphate + (2E)-geranyl diphosphate + H2O + H(+) = 5-methylaminomethyl-2-selenouridine(34) in tRNA + (2E)-thiogeraniol + phosphate + diphosphate. The catalysed reaction is 5-methylaminomethyl-2-thiouridine(34) in tRNA + (2E)-geranyl diphosphate = 5-methylaminomethyl-S-(2E)-geranyl-thiouridine(34) in tRNA + diphosphate. It carries out the reaction 5-methylaminomethyl-S-(2E)-geranyl-thiouridine(34) in tRNA + selenophosphate + H(+) = 5-methylaminomethyl-2-(Se-phospho)selenouridine(34) in tRNA + (2E)-thiogeraniol. The enzyme catalyses 5-methylaminomethyl-2-(Se-phospho)selenouridine(34) in tRNA + H2O = 5-methylaminomethyl-2-selenouridine(34) in tRNA + phosphate. In terms of biological role, involved in the post-transcriptional modification of the uridine at the wobble position (U34) of tRNA(Lys), tRNA(Glu) and tRNA(Gln). Catalyzes the conversion of 2-thiouridine (S2U-RNA) to 2-selenouridine (Se2U-RNA). Acts in a two-step process involving geranylation of 2-thiouridine (S2U) to S-geranyl-2-thiouridine (geS2U) and subsequent selenation of the latter derivative to 2-selenouridine (Se2U) in the tRNA chain. This Cronobacter sakazakii (strain ATCC BAA-894) (Enterobacter sakazakii) protein is tRNA 2-selenouridine synthase.